Reading from the N-terminus, the 449-residue chain is uncharacterized protein (449 aa).

The next 13 helical transmembrane spans lie at 1–21 (MVAN…ILLI), 26–46 (IHLT…HVIT), 51–71 (IDYI…MVLV), 97–117 (LLML…PNAT), 137–157 (FVPI…LTLV), 178–198 (FKLS…TPFL), 223–243 (VLMA…IGES), 244–264 (LPVP…ALLL), 285–305 (LIFF…GVTA), 310–330 (LLAV…VFTV), 340–360 (IPLV…IGFA), 377–397 (VLPL…GTLV), and 425–445 (GLPV…WLMF).

This sequence belongs to the CitM (TC 2.A.11) transporter family.

The protein resides in the cell membrane. This is an uncharacterized protein from Synechocystis sp. (strain ATCC 27184 / PCC 6803 / Kazusa).